The following is a 295-amino-acid chain: ATP synthase gamma chain (295 aa).

It belongs to the ATPase gamma chain family. In terms of assembly, F-type ATPases have 2 components, CF(1) - the catalytic core - and CF(0) - the membrane proton channel. CF(1) has five subunits: alpha(3), beta(3), gamma(1), delta(1), epsilon(1). CF(0) has three main subunits: a, b and c.

It is found in the cell inner membrane. Functionally, produces ATP from ADP in the presence of a proton gradient across the membrane. The gamma chain is believed to be important in regulating ATPase activity and the flow of protons through the CF(0) complex. The chain is ATP synthase gamma chain from Campylobacter concisus (strain 13826).